A 141-amino-acid chain; its full sequence is Protein KRTCAP2 homolog (141 aa).

The next 4 helical transmembrane spans lie at 11–31, 42–62, 74–94, and 97–117; these read VVSSIISGLLSIVLFGTLRFC, VLLGGYLFSWVFILSLTCVSN, AKLLPEIIFCLSLTVAAAGLV, and VCATTSVLFSLVGLYFLNRIS.

Belongs to the KRTCAP2 family. In terms of assembly, component of the oligosaccharyltransferase (OST) complex.

It is found in the membrane. Its function is as follows. Subunit of the oligosaccharyl transferase (OST) complex that catalyzes the initial transfer of a defined glycan (Glc(3)Man(9)GlcNAc(2) in eukaryotes) from the lipid carrier dolichol-pyrophosphate to an asparagine residue within an Asn-X-Ser/Thr consensus motif in nascent polypeptide chains, the first step in protein N-glycosylation. N-glycosylation occurs cotranslationally and the complex associates with the Sec61 complex at the channel-forming translocon complex that mediates protein translocation across the endoplasmic reticulum (ER). All subunits are required for a maximal enzyme activity. In Drosophila melanogaster (Fruit fly), this protein is Protein KRTCAP2 homolog.